A 212-amino-acid chain; its full sequence is Disintegrin-like halysetin (212 aa).

In terms of domain architecture, Disintegrin spans 4 to 90; sequence PPVCGNELLE…ECPADVFHKN (87 aa). Intrachain disulfides connect cysteine 7/cysteine 26, cysteine 18/cysteine 36, cysteine 62/cysteine 82, cysteine 69/cysteine 94, cysteine 101/cysteine 106, cysteine 113/cysteine 128, cysteine 151/cysteine 158, cysteine 163/cysteine 174, and cysteine 200/cysteine 205. The D/ECD-tripeptide motif lies at 68 to 70; the sequence is ECD.

It belongs to the venom metalloproteinase (M12B) family. P-III subfamily. P-IIIb sub-subfamily. Monomer. As to expression, expressed by the venom gland.

The protein resides in the secreted. Inhibits human platelet aggregation stimulated by collagen with an IC(50) of 420 nM. This Gloydius halys (Chinese water mocassin) protein is Disintegrin-like halysetin.